The chain runs to 468 residues: MAAANDYIVRDIGLADYGRKEISIAETEMPGLMATRAEYGASQPLKGAKIAGSLHMTIQTAVLIETLKHLGADIRWVSCNIYSTQDHAAAAIAAAGIPVFAVKGETLTEYWDYTSKLFDWHDGGMPNMILDDGGDATMFVHLGLRAENGDTAFLDKPESEEEEVFFALLKKKLAEKPKGWFAGLADSIKGVSEETTTGVHRLYNLAKEGKLLFPAINVNDSVTKSKFDNLYGCKESLVDGIRRGTDVMMAGKVAMVAGFGDVGKGSAASLRNAGCRVLVSEIDPICALQAAMEGYEVVTMEEAAPRADIFVTATGNKDIITIEHMRAMKDRAIVCNIGHFDNEIQVAGLKNLKWQNIKPQVDEIEFADGHRIILLSEGRLVNLGNATGHPSFVMSASFTNQTLAQIELWTNPGKYERQVYTLPKTLDEKVAALHLEKIGVKLSKLRPDQAAYIGVSQNGPFKPEHYRY.

Threonine 57, aspartate 132, and glutamate 194 together coordinate substrate. Position 195–197 (195–197 (TTT)) interacts with NAD(+). Residues lysine 224 and aspartate 228 each coordinate substrate. NAD(+)-binding positions include asparagine 229, 258–263 (GFGDVG), glutamate 281, asparagine 316, 337–339 (IGH), and asparagine 382.

Belongs to the adenosylhomocysteinase family. The cofactor is NAD(+).

It is found in the cytoplasm. It catalyses the reaction S-adenosyl-L-homocysteine + H2O = L-homocysteine + adenosine. Its pathway is amino-acid biosynthesis; L-homocysteine biosynthesis; L-homocysteine from S-adenosyl-L-homocysteine: step 1/1. In terms of biological role, may play a key role in the regulation of the intracellular concentration of adenosylhomocysteine. This is Adenosylhomocysteinase from Methylorubrum populi (strain ATCC BAA-705 / NCIMB 13946 / BJ001) (Methylobacterium populi).